A 176-amino-acid chain; its full sequence is NADH-quinone oxidoreductase subunit I 1 (176 aa).

4Fe-4S ferredoxin-type domains are found at residues 45–77 and 87–116; these read IVLT…MEAT and RWFR…MTPD. Positions 57, 60, 63, 67, 96, 99, 102, and 106 each coordinate [4Fe-4S] cluster.

This sequence belongs to the complex I 23 kDa subunit family. In terms of assembly, NDH-1 is composed of 14 different subunits. Subunits NuoA, H, J, K, L, M, N constitute the membrane sector of the complex. The cofactor is [4Fe-4S] cluster.

The protein resides in the cell inner membrane. It catalyses the reaction a quinone + NADH + 5 H(+)(in) = a quinol + NAD(+) + 4 H(+)(out). NDH-1 shuttles electrons from NADH, via FMN and iron-sulfur (Fe-S) centers, to quinones in the respiratory chain. The immediate electron acceptor for the enzyme in this species is believed to be ubiquinone. Couples the redox reaction to proton translocation (for every two electrons transferred, four hydrogen ions are translocated across the cytoplasmic membrane), and thus conserves the redox energy in a proton gradient. The sequence is that of NADH-quinone oxidoreductase subunit I 1 from Geobacter metallireducens (strain ATCC 53774 / DSM 7210 / GS-15).